We begin with the raw amino-acid sequence, 201 residues long: Small ribosomal subunit protein uS4 (201 aa).

Residues 28-47 are disordered; that stretch reads KKNYPPGQHGNSRKRKTSEY. The region spanning 92–155 is the S4 RNA-binding domain; the sequence is GRLDNIVFRL…KSLEVIANSL (64 aa).

This sequence belongs to the universal ribosomal protein uS4 family. As to quaternary structure, part of the 30S ribosomal subunit. Contacts protein S5. The interaction surface between S4 and S5 is involved in control of translational fidelity.

Functionally, one of the primary rRNA binding proteins, it binds directly to 16S rRNA where it nucleates assembly of the body of the 30S subunit. Its function is as follows. With S5 and S12 plays an important role in translational accuracy. This chain is Small ribosomal subunit protein uS4, found in Bacteroides fragilis (strain YCH46).